The sequence spans 657 residues: Protein kinase and PP2C-like domain-containing protein (657 aa).

The Protein kinase domain maps to 32–327 (FSLLSPIAKG…LKIIEKHIAV (296 aa)). ATP contacts are provided by residues 38 to 46 (IAKGSESTV) and Lys59. The active-site Proton acceptor; for kinase activity is Asp156. Positions 390–647 (SWGSFATCGR…DNITVIVVFL (258 aa)) constitute a PPM-type phosphatase domain. The Mn(2+) site is built by Asp426, Gly427, Asp598, and Asp638.

It in the N-terminal section; belongs to the protein kinase superfamily. Ser/Thr protein kinase family. In the C-terminal section; belongs to the PP2C family. It depends on Mg(2+) as a cofactor. Mn(2+) is required as a cofactor.

It catalyses the reaction L-seryl-[protein] + ATP = O-phospho-L-seryl-[protein] + ADP + H(+). The enzyme catalyses L-threonyl-[protein] + ATP = O-phospho-L-threonyl-[protein] + ADP + H(+). It carries out the reaction O-phospho-L-seryl-[protein] + H2O = L-seryl-[protein] + phosphate. The catalysed reaction is O-phospho-L-threonyl-[protein] + H2O = L-threonyl-[protein] + phosphate. The sequence is that of Protein kinase and PP2C-like domain-containing protein from Oryza sativa subsp. japonica (Rice).